The sequence spans 328 residues: Acyl-CoA wax alcohol acyltransferase 1 (328 aa).

2 helical membrane-spanning segments follow: residues 12 to 32 and 34 to 53; these read SLMLLQWPLSYLAIFWILQPL and VYLLFTSLWPLPVLYFAWLF.

It belongs to the diacylglycerol acyltransferase family. In terms of tissue distribution, predominantly expressed in skin, where it is limited to the sebaceous gland. Expressed in more mature, centrally located cells just before their rupture and sebum release. Also expressed in all tissues except spleen. Expressed at higher level in thymus, prostate and testis.

It localises to the endoplasmic reticulum membrane. It carries out the reaction a long chain fatty alcohol + a fatty acyl-CoA = a wax ester + CoA. The catalysed reaction is 1,2-di-(9Z-octadecenoyl)-sn-glycerol + (9Z)-octadecenoyl-CoA = 1,2,3-tri-(9Z-octadecenoyl)-glycerol + CoA. The enzyme catalyses hexadecan-1-ol + (9Z)-octadecenoyl-CoA = hexadecanyl (9Z)-octadecenoate + CoA. It catalyses the reaction decan-1-ol + (9Z)-octadecenoyl-CoA = 1-O-decyl-(9Z)-octadecenoate + CoA. It carries out the reaction (9Z)-hexadecen-1-ol + (9Z)-octadecenoyl-CoA = 1-O-(9Z)-hexadecenyl (9Z)-octadecenoate + CoA. The catalysed reaction is octadecan-1-ol + (9Z)-octadecenoyl-CoA = 1-O-octadecyl (9Z)-octadecenoate + CoA. The enzyme catalyses (9Z)-octadecen-1-ol + (9Z)-octadecenoyl-CoA = 1-O-(9Z)-octadecenyl (9Z)-octadecenoate + CoA. It catalyses the reaction hexadecan-1-ol + hexadecanoyl-CoA = hexadecanyl hexadecanoate + CoA. It carries out the reaction hexadecan-1-ol + (9Z)-hexadecenoyl-CoA = 1-O-hexadecyl (9Z)-hexadecenoate + CoA. The catalysed reaction is hexadecan-1-ol + octadecanoyl-CoA = hexadecanyl octadecanoate + CoA. The enzyme catalyses eicosan-1-ol + (9Z)-octadecenoyl-CoA = 1-O-eicosanyl (9Z)-octadecenoate + CoA. Acyltransferase that catalyzes the formation of ester bonds between fatty alcohols and fatty acyl-CoAs to form wax monoesters. Shows a strong preference for decyl alcohol (C10), with less activity towards C16 and C18 alcohols. Shows a strong preference for saturated acyl-CoAs. The sequence is that of Acyl-CoA wax alcohol acyltransferase 1 (AWAT1) from Homo sapiens (Human).